We begin with the raw amino-acid sequence, 874 residues long: Alanine--tRNA ligase (874 aa).

Residues histidine 564, histidine 568, cysteine 666, and histidine 670 each coordinate Zn(2+).

Belongs to the class-II aminoacyl-tRNA synthetase family. The cofactor is Zn(2+).

Its subcellular location is the cytoplasm. The enzyme catalyses tRNA(Ala) + L-alanine + ATP = L-alanyl-tRNA(Ala) + AMP + diphosphate. In terms of biological role, catalyzes the attachment of alanine to tRNA(Ala) in a two-step reaction: alanine is first activated by ATP to form Ala-AMP and then transferred to the acceptor end of tRNA(Ala). Also edits incorrectly charged Ser-tRNA(Ala) and Gly-tRNA(Ala) via its editing domain. The protein is Alanine--tRNA ligase of Carboxydothermus hydrogenoformans (strain ATCC BAA-161 / DSM 6008 / Z-2901).